A 347-amino-acid polypeptide reads, in one-letter code: Quinolinate synthase (347 aa).

Positions 47 and 68 each coordinate iminosuccinate. Cys-113 is a binding site for [4Fe-4S] cluster. Iminosuccinate contacts are provided by residues 139-141 (YAN) and Ser-156. Residue Cys-200 participates in [4Fe-4S] cluster binding. Iminosuccinate contacts are provided by residues 226–228 (HPE) and Thr-243. Cys-297 contacts [4Fe-4S] cluster.

Belongs to the quinolinate synthase family. Type 1 subfamily. [4Fe-4S] cluster is required as a cofactor.

It localises to the cytoplasm. It catalyses the reaction iminosuccinate + dihydroxyacetone phosphate = quinolinate + phosphate + 2 H2O + H(+). Its pathway is cofactor biosynthesis; NAD(+) biosynthesis; quinolinate from iminoaspartate: step 1/1. Catalyzes the condensation of iminoaspartate with dihydroxyacetone phosphate to form quinolinate. In Escherichia coli O157:H7, this protein is Quinolinate synthase.